The following is a 189-amino-acid chain: 7-methyl-GTP pyrophosphatase (189 aa).

The active-site Proton acceptor is D71.

The protein belongs to the Maf family. YceF subfamily. A divalent metal cation serves as cofactor.

The protein resides in the cytoplasm. It carries out the reaction N(7)-methyl-GTP + H2O = N(7)-methyl-GMP + diphosphate + H(+). Its function is as follows. Nucleoside triphosphate pyrophosphatase that hydrolyzes 7-methyl-GTP (m(7)GTP). May have a dual role in cell division arrest and in preventing the incorporation of modified nucleotides into cellular nucleic acids. The protein is 7-methyl-GTP pyrophosphatase of Bdellovibrio bacteriovorus (strain ATCC 15356 / DSM 50701 / NCIMB 9529 / HD100).